Here is a 311-residue protein sequence, read N- to C-terminus: Ribose-5-phosphate isomerase (311 aa).

Residues 22–32 show a composition bias toward gly residues; it reads AGGAASGGGGN. The tract at residues 22–67 is disordered; the sequence is AGGAASGGGGNSWDLPGSHVRLPGRAQSGTRGGAGNTSTSCGDSNS. An Omega-N-methylarginine modification is found at Arg-52. Residues 57–67 show a composition bias toward polar residues; it reads NTSTSCGDSNS. Ser-106 is modified (phosphoserine).

The protein belongs to the ribose 5-phosphate isomerase family.

The enzyme catalyses aldehydo-D-ribose 5-phosphate = D-ribulose 5-phosphate. The protein operates within carbohydrate degradation; pentose phosphate pathway; D-ribose 5-phosphate from D-ribulose 5-phosphate (non-oxidative stage): step 1/1. In terms of biological role, catalyzes the reversible conversion of ribose-5-phosphate to ribulose 5-phosphate and participates in the first step of the non-oxidative branch of the pentose phosphate pathway. The sequence is that of Ribose-5-phosphate isomerase from Homo sapiens (Human).